Here is a 514-residue protein sequence, read N- to C-terminus: Retron Vc95 probable ATPase (514 aa).

Residues 92–99 (GNNGSGKS) carry the ATP-binding motif.

Probable ATPase component of antiviral defense system retron Vc95, composed of a non-coding RNA (ncRNA), a reverse transcriptase (RT), this protein and a putative HNH endonuclease. Expression of retron Vc95 confers protection against bacteriophages T2, T4 and T6. At multiplicity of infection (MOI) of 0.02 cultures slow growth when infected with T4 but do not collapse, at MOI 2 cultures enter growth stasis. The polypeptide is Retron Vc95 probable ATPase (Vibrio cholerae serotype O1 biovar El Tor).